A 460-amino-acid chain; its full sequence is tRNA modification GTPase MnmE (460 aa).

(6S)-5-formyl-5,6,7,8-tetrahydrofolate contacts are provided by R24, E81, and K121. Residues 218-384 (GLVVAIAGPP…MVEALAGFAA (167 aa)) enclose the TrmE-type G domain. GTP-binding positions include 228–233 (NVGKST), 247–253 (SPHAGTT), and 272–275 (DTAG). Residues S232 and T253 each contribute to the Mg(2+) site. K460 is a binding site for (6S)-5-formyl-5,6,7,8-tetrahydrofolate.

It belongs to the TRAFAC class TrmE-Era-EngA-EngB-Septin-like GTPase superfamily. TrmE GTPase family. Homodimer. Heterotetramer of two MnmE and two MnmG subunits. K(+) serves as cofactor.

Its subcellular location is the cytoplasm. Exhibits a very high intrinsic GTPase hydrolysis rate. Involved in the addition of a carboxymethylaminomethyl (cmnm) group at the wobble position (U34) of certain tRNAs, forming tRNA-cmnm(5)s(2)U34. The polypeptide is tRNA modification GTPase MnmE (Rhodopseudomonas palustris (strain HaA2)).